The sequence spans 692 residues: Methionine--tRNA ligase (692 aa).

Residues 12-22 (PYANGPLHLGH) carry the 'HIGH' region motif. Residues cysteine 143, cysteine 146, cysteine 156, and cysteine 159 each contribute to the Zn(2+) site. Residues 330-334 (KMSKS) carry the 'KMSKS' region motif. Lysine 333 lines the ATP pocket. A compositionally biased stretch (low complexity) spans 554–563 (AAAAPAAKPA). The disordered stretch occupies residues 554–575 (AAAAPAAKPAAPAPAPAPAKDE). Positions 589–692 (DFAKLDLRIG…SGAQPGMPVR (104 aa)) constitute a tRNA-binding domain.

The protein belongs to the class-I aminoacyl-tRNA synthetase family. MetG type 1 subfamily. In terms of assembly, homodimer. Zn(2+) is required as a cofactor.

The protein localises to the cytoplasm. The enzyme catalyses tRNA(Met) + L-methionine + ATP = L-methionyl-tRNA(Met) + AMP + diphosphate. Functionally, is required not only for elongation of protein synthesis but also for the initiation of all mRNA translation through initiator tRNA(fMet) aminoacylation. The sequence is that of Methionine--tRNA ligase from Stenotrophomonas maltophilia (strain K279a).